The following is a 475-amino-acid chain: F-box protein At3g59150 (475 aa).

The F-box domain maps to 12 to 58 (GDVISNLPNDLLCRILSYLSTKEAALTSILSKRWSNLLLSIPILDFD).

The protein is F-box protein At3g59150 of Arabidopsis thaliana (Mouse-ear cress).